A 154-amino-acid polypeptide reads, in one-letter code: CASP-like protein 5C2 (154 aa).

The Cytoplasmic portion of the chain corresponds to Met1–Arg17. A helical membrane pass occupies residues Phe18 to Tyr38. Over Asp39–Thr41 the chain is Extracellular. The helical transmembrane segment at Thr42–Leu62 threads the bilayer. Residues Thr63 to Ser81 lie on the Cytoplasmic side of the membrane. Residues Ile82 to Ala102 traverse the membrane as a helical segment. Topologically, residues Ser103 to Ala128 are extracellular. The helical transmembrane segment at Ala129–Leu149 threads the bilayer. At Pro150–Tyr154 the chain is on the cytoplasmic side.

The protein belongs to the Casparian strip membrane proteins (CASP) family. As to quaternary structure, homodimer and heterodimers.

The protein localises to the cell membrane. This is CASP-like protein 5C2 from Arabidopsis thaliana (Mouse-ear cress).